Here is a 329-residue protein sequence, read N- to C-terminus: Clavesin-2 (329 aa).

Positions 96 to 257 (IKQALKDGFP…ELGGMLPPYD (162 aa)) constitute a CRAL-TRIO domain. Residues 293 to 329 (SPKTMKRSQSVVEPGVLKRPEKVKSEEENMQPLLSLD) are disordered. Basic and acidic residues predominate over residues 308 to 319 (VLKRPEKVKSEE).

The protein resides in the golgi apparatus. The protein localises to the trans-Golgi network membrane. It localises to the early endosome membrane. It is found in the cytoplasmic vesicle. Its subcellular location is the clathrin-coated vesicle. Functionally, required for normal morphology of late endosomes and/or lysosomes in neurons. Binds phosphatidylinositol 3,5-bisphosphate (PtdIns(3,5)P2). In Danio rerio (Zebrafish), this protein is Clavesin-2 (clvs2).